Here is a 365-residue protein sequence, read N- to C-terminus: Eukaryotic translation initiation factor 3 subunit H (365 aa).

The MPN domain occupies 15 to 166 (ILLDSLVVMK…LRAWRLSTAA (152 aa)).

This sequence belongs to the eIF-3 subunit H family. Component of the eukaryotic translation initiation factor 3 (eIF-3) complex.

It is found in the cytoplasm. Its function is as follows. Component of the eukaryotic translation initiation factor 3 (eIF-3) complex, which is involved in protein synthesis of a specialized repertoire of mRNAs and, together with other initiation factors, stimulates binding of mRNA and methionyl-tRNAi to the 40S ribosome. The eIF-3 complex specifically targets and initiates translation of a subset of mRNAs involved in cell proliferation. In Caenorhabditis elegans, this protein is Eukaryotic translation initiation factor 3 subunit H.